A 309-amino-acid chain; its full sequence is HPr kinase/phosphorylase (309 aa).

Residues H138 and K159 contribute to the active site. Position 153–160 (153–160 (GASGIGKS)) interacts with ATP. Residue S160 coordinates Mg(2+). The Proton acceptor; for phosphorylation activity. Proton donor; for dephosphorylation activity role is filled by D177. The segment at 201–210 (IEIRGVGIID) is important for the catalytic mechanism of both phosphorylation and dephosphorylation. Mg(2+) is bound at residue E202. R243 is a catalytic residue. Residues 264–269 (PVKTGR) are important for the catalytic mechanism of dephosphorylation.

It belongs to the HPrK/P family. As to quaternary structure, homohexamer. Mg(2+) serves as cofactor.

It carries out the reaction [HPr protein]-L-serine + ATP = [HPr protein]-O-phospho-L-serine + ADP + H(+). The enzyme catalyses [HPr protein]-O-phospho-L-serine + phosphate + H(+) = [HPr protein]-L-serine + diphosphate. Catalyzes the ATP- as well as the pyrophosphate-dependent phosphorylation of a specific serine residue in HPr, a phosphocarrier protein of the phosphoenolpyruvate-dependent sugar phosphotransferase system (PTS). HprK/P also catalyzes the pyrophosphate-producing, inorganic phosphate-dependent dephosphorylation (phosphorolysis) of seryl-phosphorylated HPr (P-Ser-HPr). The two antagonistic activities of HprK/P are regulated by several intracellular metabolites, which change their concentration in response to the absence or presence of rapidly metabolisable carbon sources (glucose, fructose, etc.) in the growth medium. Therefore, by controlling the phosphorylation state of HPr, HPrK/P is a sensor enzyme that plays a major role in the regulation of carbon metabolism and sugar transport: it mediates carbon catabolite repression (CCR), and regulates PTS-catalyzed carbohydrate uptake and inducer exclusion. The protein is HPr kinase/phosphorylase of Lactococcus lactis subsp. lactis (strain IL1403) (Streptococcus lactis).